The following is a 237-amino-acid chain: Urease subunit alpha (237 aa).

Residues 1–102 (MKLTPKELDK…LVTIHTPVED (102 aa)) are urease gamma. The interval 103-237 (NGKLAPGEVF…CGCEATKDKQ (135 aa)) is urease beta.

The protein in the N-terminal section; belongs to the urease gamma subunit family. In the C-terminal section; belongs to the urease beta subunit family. As to quaternary structure, heterohexamer of 3 UreA (alpha) and 3 UreB (beta) subunits.

It is found in the cytoplasm. It carries out the reaction urea + 2 H2O + H(+) = hydrogencarbonate + 2 NH4(+). It participates in nitrogen metabolism; urea degradation; CO(2) and NH(3) from urea (urease route): step 1/1. In Helicobacter felis, this protein is Urease subunit alpha.